Reading from the N-terminus, the 729-residue chain is Polyribonucleotide nucleotidyltransferase (729 aa).

Residues aspartate 510 and aspartate 516 each coordinate Mg(2+). The 60-residue stretch at proline 576 to isoleucine 635 folds into the KH domain. Residues glycine 647–serine 719 form the S1 motif domain.

Belongs to the polyribonucleotide nucleotidyltransferase family. Requires Mg(2+) as cofactor.

It is found in the cytoplasm. It catalyses the reaction RNA(n+1) + phosphate = RNA(n) + a ribonucleoside 5'-diphosphate. In terms of biological role, involved in mRNA degradation. Catalyzes the phosphorolysis of single-stranded polyribonucleotides processively in the 3'- to 5'-direction. This is Polyribonucleotide nucleotidyltransferase from Frankia alni (strain DSM 45986 / CECT 9034 / ACN14a).